The primary structure comprises 310 residues: MSQRYRGRFAPSPTGPLHLGSLVTALASWLDARAHGGDWLVRIEDIDYPRCVRDADNDILRTLDALGLHPDEPPVWQSRREGLYAEALRQLDAAGYLYPCGCTRKEIADSLVHVRERHQTLGYPGTCRNGLHGKLPRAWRVRVPDGPAATICFDDRWQGRQCQNLETELGDFVLRRADGLWAYQLAVVVDDAAQGITHIVRGADLLDSTPRQIHLEHLLGLPTPDYLHVPVVVNAVGEKLSKQSGAQALDASAPLDALRTAGTHLGIVNQETTVAAWLATATGQWLERLRAVQDLRGTPPSSAATGRLGA.

Residues 8–12 (RFAPS) and glutamate 44 contribute to the L-glutamate site. Positions 11 to 21 (PSPTGPLHLGS) match the 'HIGH' region motif. 4 residues coordinate Zn(2+): cysteine 100, cysteine 102, tyrosine 123, and cysteine 127. Residues tyrosine 183 and arginine 201 each coordinate L-glutamate. The 'KMSKS' region signature appears at 239–243 (KLSKQ). Position 242 (lysine 242) interacts with ATP.

The protein belongs to the class-I aminoacyl-tRNA synthetase family. GluQ subfamily. The cofactor is Zn(2+).

Functionally, catalyzes the tRNA-independent activation of glutamate in presence of ATP and the subsequent transfer of glutamate onto a tRNA(Asp). Glutamate is transferred on the 2-amino-5-(4,5-dihydroxy-2-cyclopenten-1-yl) moiety of the queuosine in the wobble position of the QUC anticodon. The chain is Glutamyl-Q tRNA(Asp) synthetase from Cupriavidus metallidurans (strain ATCC 43123 / DSM 2839 / NBRC 102507 / CH34) (Ralstonia metallidurans).